The primary structure comprises 176 residues: MGFPKEGETIQIHSYKHNGQIHRIWNETTILKATELCIIGANDRTMVTESDGRTWVTREPAICYFHAKQWFNVIGMLREDGIYYYCNISSPFALDDEAIKYIDYDLDVKVFPDMTYHILDEDEYADHKKAMNYPKEIDGILRYHLNTLLHWIHQRKGPFASEFIDIWYERYLHYTK.

The active-site Proton donor is the Arg23. Mg(2+) is bound by residues Asn87, Asp103, Asp105, Asp107, Asp120, and Glu123.

It belongs to the Ntdp family. Mg(2+) serves as cofactor.

The enzyme catalyses a ribonucleoside 5'-triphosphate + H2O = a ribonucleoside 5'-diphosphate + phosphate + H(+). The catalysed reaction is a ribonucleoside 5'-diphosphate + H2O = a ribonucleoside 5'-phosphate + phosphate + H(+). Functionally, has nucleoside phosphatase activity towards nucleoside triphosphates and nucleoside diphosphates. This Bacillus licheniformis (strain ATCC 14580 / DSM 13 / JCM 2505 / CCUG 7422 / NBRC 12200 / NCIMB 9375 / NCTC 10341 / NRRL NRS-1264 / Gibson 46) protein is Nucleoside triphosphate/diphosphate phosphatase.